The primary structure comprises 64 residues: Alpha-mammal toxin BmK-M8 (64 aa).

Residues 2–64 form the LCN-type CS-alpha/beta domain; that stretch reads RDAYIADSEN…ERIKEPGKCG (63 aa). 4 disulfide bridges follow: cysteine 12/cysteine 63, cysteine 16/cysteine 36, cysteine 22/cysteine 46, and cysteine 26/cysteine 48.

It belongs to the long (4 C-C) scorpion toxin superfamily. Sodium channel inhibitor family. Alpha subfamily. Expressed by the venom gland.

The protein resides in the secreted. Its function is as follows. Alpha toxins bind voltage-independently at site-3 of sodium channels (Nav) and inhibit the inactivation of the activated channels, thereby blocking neuronal transmission. This acidic toxin has a weak toxicity and is active against mammals. This is Alpha-mammal toxin BmK-M8 from Olivierus martensii (Manchurian scorpion).